Here is a 393-residue protein sequence, read N- to C-terminus: tRNA(Met) cytidine acetate ligase (393 aa).

Residues G81, N142, and R167 each coordinate ATP.

Belongs to the TmcAL family.

The protein localises to the cytoplasm. The enzyme catalyses cytidine(34) in elongator tRNA(Met) + acetate + ATP = N(4)-acetylcytidine(34) in elongator tRNA(Met) + AMP + diphosphate. Its function is as follows. Catalyzes the formation of N(4)-acetylcytidine (ac(4)C) at the wobble position of elongator tRNA(Met), using acetate and ATP as substrates. First activates an acetate ion to form acetyladenylate (Ac-AMP) and then transfers the acetyl group to tRNA to form ac(4)C34. The sequence is that of tRNA(Met) cytidine acetate ligase from Bacillus cereus (strain ZK / E33L).